The primary structure comprises 47 residues: Antimicrobial peptide LCI (47 aa).

The protein localises to the secreted. In terms of biological role, has antibacterial activity against X.oryzae pv oryzae and R.solanacearum, but not E.coli or P.carotovorum subsp carotovorum. May bind DNA or mRNA. This is Antimicrobial peptide LCI from Bacillus subtilis.